We begin with the raw amino-acid sequence, 174 residues long: 2-C-methyl-D-erythritol 2,4-cyclodiphosphate synthase (174 aa).

3 residues coordinate a divalent metal cation: aspartate 13, histidine 15, and histidine 61. 4-CDP-2-C-methyl-D-erythritol 2-phosphate is bound at residue aspartate 13–histidine 15. 4-CDP-2-C-methyl-D-erythritol 2-phosphate-binding positions include aspartate 75 to glycine 77, threonine 149 to aspartate 152, phenylalanine 156, and histidine 159.

Belongs to the IspF family. In terms of assembly, homotrimer. Requires a divalent metal cation as cofactor.

The enzyme catalyses 4-CDP-2-C-methyl-D-erythritol 2-phosphate = 2-C-methyl-D-erythritol 2,4-cyclic diphosphate + CMP. It participates in isoprenoid biosynthesis; isopentenyl diphosphate biosynthesis via DXP pathway; isopentenyl diphosphate from 1-deoxy-D-xylulose 5-phosphate: step 4/6. In terms of biological role, involved in the biosynthesis of isopentenyl diphosphate (IPP) and dimethylallyl diphosphate (DMAPP), two major building blocks of isoprenoid compounds. Catalyzes the conversion of 4-diphosphocytidyl-2-C-methyl-D-erythritol 2-phosphate (CDP-ME2P) to 2-C-methyl-D-erythritol 2,4-cyclodiphosphate (ME-CPP) with a corresponding release of cytidine 5-monophosphate (CMP). The sequence is that of 2-C-methyl-D-erythritol 2,4-cyclodiphosphate synthase from Bifidobacterium longum (strain NCC 2705).